The following is a 197-amino-acid chain: Fucoxanthin-chlorophyll a-c binding protein F, chloroplastic (197 aa).

Residues 1 to 31 constitute a chloroplast transit peptide; the sequence is MKFAVFASLLASAAAFAPAQQSARTSVATNM. 3 consecutive transmembrane segments (helical) span residues 73-94, 114-134, and 174-196; these read ISMLAVVGYLVQENGIRLPGDI, ISTAGIAQIVAFIGFLEIAVM, and GRAAQMGILALMVHEKLGVSLIP.

It belongs to the fucoxanthin chlorophyll protein family. As to quaternary structure, the LHC complex of chromophytic algae is composed of fucoxanthin, chlorophyll A and C bound non-covalently by fucoxanthin chlorophyll proteins (FCPs). The ratio of the pigments in lhc; fucoxanthin: chlorophyll C: chlorophyll A is (0.6-1): (0.1-0.3): (1).

The protein resides in the plastid. Its subcellular location is the chloroplast thylakoid membrane. Functionally, the light-harvesting complex (LHC) functions as a light receptor, it captures and delivers excitation energy to photosystems with which it is closely associated. In chromophytic algae, LHC is associated with photosystem II, energy being transferred from fucoxanthin and chlorophyll C to chlorophyll A and the photosynthetic reaction centers where it is used to synthesize ATP and reducing power. The protein is Fucoxanthin-chlorophyll a-c binding protein F, chloroplastic (FCPF) of Phaeodactylum tricornutum (Diatom).